Reading from the N-terminus, the 453-residue chain is Ribosomal protein uS12 methylthiotransferase RimO (453 aa).

One can recognise an MTTase N-terminal domain in the interval 9-124; that stretch reads PKIGFVSLGC…VMDAVHKHMP (116 aa). [4Fe-4S] cluster is bound by residues Cys18, Cys54, Cys83, Cys155, Cys159, and Cys162. In terms of domain architecture, Radical SAM core spans 141 to 382; sequence LTPKHFAYLK…MLLQEEISKK (242 aa). Residues 385–453 form the TRAM domain; the sequence is QAKVGKTMRV…ADAHDLWAEA (69 aa).

The protein belongs to the methylthiotransferase family. RimO subfamily. It depends on [4Fe-4S] cluster as a cofactor.

The protein resides in the cytoplasm. It carries out the reaction L-aspartate(89)-[ribosomal protein uS12]-hydrogen + (sulfur carrier)-SH + AH2 + 2 S-adenosyl-L-methionine = 3-methylsulfanyl-L-aspartate(89)-[ribosomal protein uS12]-hydrogen + (sulfur carrier)-H + 5'-deoxyadenosine + L-methionine + A + S-adenosyl-L-homocysteine + 2 H(+). Functionally, catalyzes the methylthiolation of an aspartic acid residue of ribosomal protein uS12. The protein is Ribosomal protein uS12 methylthiotransferase RimO of Janthinobacterium sp. (strain Marseille) (Minibacterium massiliensis).